Here is an 885-residue protein sequence, read N- to C-terminus: Chitobiase (885 aa).

A signal peptide spans 1 to 27 (MNAFKLSALARLTATMGFLGGMGSAMA). Cystine bridges form between Cys56–Cys66, Cys400–Cys408, and Cys505–Cys578. Glu540 serves as the catalytic Proton donor. The disordered stretch occupies residues 866 to 885 (EVQVRSVSPDGKRYSRAEKV). Residues 875-885 (DGKRYSRAEKV) show a composition bias toward basic and acidic residues.

Belongs to the glycosyl hydrolase 20 family. Monomer.

The protein localises to the periplasm. It carries out the reaction Hydrolysis of terminal non-reducing N-acetyl-D-hexosamine residues in N-acetyl-beta-D-hexosaminides.. Its pathway is glycan degradation; chitin degradation. Digests the beta-1,4-glycosidic bonds in N-acetylglucosamine (GlcNAc) oligomers (mainly dimers). The protein is Chitobiase (chb) of Serratia marcescens.